Reading from the N-terminus, the 258-residue chain is Regulatory protein RecX (258 aa).

This sequence belongs to the RecX family.

It localises to the cytoplasm. Functionally, modulates RecA activity. This Streptococcus pyogenes serotype M5 (strain Manfredo) protein is Regulatory protein RecX.